The primary structure comprises 677 residues: MSTRDLSVLISVVLIVAMLVIPFPPWLLSILIIINISLALIVLLTTMNMQEALQFSIFPSLLLLLTLFRLGLNVSTTRSILSHGEGGKVVETFGNFVVGGNVLVGLVVFIILIIIQFIVITKGAERVSEVAARFTLDAMPGKQMSIDADLNAGMITEQEAKHRREKVAREADFYGAMDGASKFVKGDAIAGIIIVMINIIFGIVIGMLQQGMSIQEAASHFTMLTVGDGIVSQIPALLISTATGIVVTRAASEGNLGHDITGQLFAYPKLLYVAAATIMLLGIFTPIGILLTGPLAGLLAFGAYTLSKSGKEKEEVDEILEEEAEVDELKSPESVVQLLHIDPIEFEFGYGLIPLADANQGGDLLDRIVMIRRQLALELGLVIPVVRIRDNIALQPNEYRLKIKGNEVAKGELLLDHYLAMSPTPEDDLIEGIETVEPSFGLPAKWISEAVKDEADMLGYTVVDPASVVSTHITEKIKQHAHELIGRQETKQLIDHLKESYPVLVEEVTPNPLSVGDIQKVLAKLLKEKVSIRNLVTIFETLADYGKLTTDSDLLTEYTRQALAKQITAQFAKENEVLKVVTCSGRVEKAIADGVQQTEHGNYLSLEPDISESIVRSVAKEAEQLSLRQETAILLCSPPVRMYVKQLLERYFPDLPVLSYNELEANVEVQSIGVVDI.

The next 7 helical transmembrane spans lie at 6-22 (LSVLISVVLIVAMLVIP), 27-43 (LLSILIIINISLALIVL), 52-68 (ALQFSIFPSLLLLLTLF), 104-120 (VGLVVFIILIIIQFIVI), 189-205 (IAGIIIVMINIIFGIVI), 230-246 (IVSQIPALLISTATGIV), and 275-291 (AATIMLLGIFTPIGILL).

It belongs to the FHIPEP (flagella/HR/invasion proteins export pore) family.

It localises to the cell membrane. Involved in the export of flagellum proteins. The protein is Flagellar biosynthesis protein FlhA (flhA) of Bacillus subtilis (strain 168).